Reading from the N-terminus, the 623-residue chain is Glutathione import ATP-binding protein GsiA (623 aa).

2 consecutive ABC transporter domains span residues 15 to 269 and 314 to 564; these read VENL…RALL and LRVR…RKLL. ATP is bound by residues 49–56 and 357–364; these read GESGSGKS.

The protein belongs to the ABC transporter superfamily. Glutathione importer (TC 3.A.1.5.11) family. In terms of assembly, the complex is composed of two ATP-binding proteins (GsiA), two transmembrane proteins (GsiC and GsiD) and a solute-binding protein (GsiB).

Its subcellular location is the cell inner membrane. The catalysed reaction is glutathione(out) + ATP + H2O = glutathione(in) + ADP + phosphate + H(+). Part of the ABC transporter complex GsiABCD involved in glutathione import. Responsible for energy coupling to the transport system. The polypeptide is Glutathione import ATP-binding protein GsiA (Shigella sonnei (strain Ss046)).